Reading from the N-terminus, the 727-residue chain is Putative ATP-dependent RNA helicase DHX15 (727 aa).

Positions 1-41 (MSKRKHESSDSNKKAMKKQQNKIEEEEEEITNTTTTTTTTN) are disordered. A compositionally biased stretch (low complexity) spans 31–41 (TNTTTTTTTTN). Residues 87 to 251 (IKVIKENQVV…FENAPLIKVP (165 aa)) form the Helicase ATP-binding domain. 100–107 (GETGSGKT) contacts ATP. The DEAH box signature appears at 198–201 (DEAH). The 173-residue stretch at 273-445 (AVRTVIDIHT…SVVLQLLKLG (173 aa)) folds into the Helicase C-terminal domain.

This sequence belongs to the DEAD box helicase family. DEAH subfamily. DDX15/PRP43 sub-subfamily.

It is found in the nucleus. It catalyses the reaction ATP + H2O = ADP + phosphate + H(+). Its function is as follows. Pre-mRNA processing factor involved in disassembly of spliceosomes after the release of mature mRNA. The sequence is that of Putative ATP-dependent RNA helicase DHX15 (dhx15) from Dictyostelium discoideum (Social amoeba).